The primary structure comprises 239 residues: MLEILYQDGFLVAVNKPAGMLVHRSWLDPHETQFVMQTLRDQIGQHVFPIHRLDRPTSGVLLFALSSEIANLMCEQFEQKYVQKSYLAVVRGYLQGKERIDYPLKIQLDKIADKFSQEDKEPQEAITDYEGLKIVEMPYPAGRYQTARYSLVKLIPHTGRKHXLRXHMKHVFHPIXGDTQYGDLHQNRALMSHLGCSRLFLHSDSLSFIHPITKEQITITAGLDEQWQQLMNQFGWENV.

The active site involves Asp-54.

This sequence belongs to the pseudouridine synthase RluA family.

The enzyme catalyses uridine(65) in tRNA = pseudouridine(65) in tRNA. Responsible for synthesis of pseudouridine from uracil-65 in transfer RNAs. This is tRNA pseudouridine synthase C (truC) from Haemophilus influenzae (strain ATCC 51907 / DSM 11121 / KW20 / Rd).